We begin with the raw amino-acid sequence, 2999 residues long: TPR and ankyrin repeat-containing protein 1 (2999 aa).

Residues 1 to 87 (MASTTAGRRW…QPRGSTDSAC (87 aa)) are disordered. Positions 19–36 (RGPTPRSRAPGAKLSAPE) are enriched in low complexity. 2 TPR repeats span residues 144–177 (AMLLCNKSNAFYNLGKWNEAFLAAKECLQWDPTY) and 179–211 (KGYYRAGYSLLHLLQPYEAARMFFEGLRLLQRS). 6 ANK repeats span residues 297 to 327 (EKYVFIGFYEKLEQVPKLVQWLVSIGANIET), 328 to 361 (IGPNPLHALMRLCIQARESQLFRWVMDQKPEWKE), 369 to 405 (AGCTVLHVAAAHFPGYTSRRQTEDVQMLLSFGADPTL), 538 to 567 (SQDRPLLMCLRHEDFDLAFLLLTKGADPRS), 572 to 593 (EGDTPLHAALHIFLDINADIGF), and 621 to 654 (NGNTLMHLLFQKGMLKRTKKLIDLLVKFDINFNL). 4 disordered regions span residues 684–722 (RRKNRQDPAAHLGRLSRSSAPGHTSQLKSQTSFKSLPCG), 773–831 (MPLP…GASQ), 1151–1211 (LEVE…GCVP), and 1318–1344 (WEEDDEEVEADGNYNEEEKATETQTGD). Composition is skewed to polar residues over residues 699-717 (SRSSAPGHTSQLKSQTSFK) and 801-815 (TQRMGSSGCSGNNPV). The span at 1151–1164 (LEVEPGKEGPGREE) shows a compositional bias: basic and acidic residues. Over residues 1318–1327 (WEEDDEEVEA) the composition is skewed to acidic residues. TPR repeat units lie at residues 1772-1805 (PYEWIIQGDYYAKHQCWKVAAKCYQKGDALEKEK) and 1866-1899 (LGKIRDAAYFYKRSQCFQDAFRCFEQIQEFDLAL).

As to expression, expressed only in the brain. Detected in the hippocampus, hypothalamus and cingulate gyrus.

The polypeptide is TPR and ankyrin repeat-containing protein 1 (Trank1) (Mus musculus (Mouse)).